The primary structure comprises 257 residues: NAD-capped RNA hydrolase NudC (257 aa).

Arginine 69 contributes to the substrate binding site. Positions 98 and 101 each coordinate Zn(2+). Position 111 (glutamate 111) interacts with substrate. Positions 116 and 119 each coordinate Zn(2+). Tyrosine 124 serves as a coordination point for substrate. Residues 125 to 248 (PQIAPCIIVA…TVARRLIEDT (124 aa)) form the Nudix hydrolase domain. A divalent metal cation is bound by residues alanine 158, glutamate 174, and glutamate 178. The short motif at 159–180 (GFVEVGETLEQAVAREVMEESG) is the Nudix box element. 192-199 (QPWPFPQS) lines the substrate pocket. Glutamate 219 serves as a coordination point for a divalent metal cation. A substrate-binding site is contributed by alanine 241.

This sequence belongs to the Nudix hydrolase family. NudC subfamily. As to quaternary structure, homodimer. Mg(2+) is required as a cofactor. Mn(2+) serves as cofactor. The cofactor is Zn(2+).

It catalyses the reaction a 5'-end NAD(+)-phospho-ribonucleoside in mRNA + H2O = a 5'-end phospho-adenosine-phospho-ribonucleoside in mRNA + beta-nicotinamide D-ribonucleotide + 2 H(+). It carries out the reaction NAD(+) + H2O = beta-nicotinamide D-ribonucleotide + AMP + 2 H(+). The enzyme catalyses NADH + H2O = reduced beta-nicotinamide D-ribonucleotide + AMP + 2 H(+). MRNA decapping enzyme that specifically removes the nicotinamide adenine dinucleotide (NAD) cap from a subset of mRNAs by hydrolyzing the diphosphate linkage to produce nicotinamide mononucleotide (NMN) and 5' monophosphate mRNA. The NAD-cap is present at the 5'-end of some mRNAs and stabilizes RNA against 5'-processing. Has preference for mRNAs with a 5'-end purine. Catalyzes the hydrolysis of a broad range of dinucleotide pyrophosphates. In Klebsiella pneumoniae subsp. pneumoniae (strain ATCC 700721 / MGH 78578), this protein is NAD-capped RNA hydrolase NudC.